A 365-amino-acid chain; its full sequence is Carbamoyl phosphate synthase small chain (365 aa).

2 CPSase regions span residues 1–166 and 1–169; these read MKRQ…PSPG and MKRQ…GRGH. L-glutamine contacts are provided by Ser-45, Gly-218, and Gly-220. In terms of domain architecture, Glutamine amidotransferase type-1 spans 170-357; sequence RVVLVDFGMK…LTMIENFKKE (188 aa). The active-site Nucleophile is the Cys-245. Residues Leu-246, Gln-249, Asn-287, Gly-289, and Tyr-290 each coordinate L-glutamine. Active-site residues include His-330 and Glu-332.

The protein belongs to the CarA family. In terms of assembly, composed of two chains; the small (or glutamine) chain promotes the hydrolysis of glutamine to ammonia, which is used by the large (or ammonia) chain to synthesize carbamoyl phosphate. Tetramer of heterodimers (alpha,beta)4.

It carries out the reaction hydrogencarbonate + L-glutamine + 2 ATP + H2O = carbamoyl phosphate + L-glutamate + 2 ADP + phosphate + 2 H(+). It catalyses the reaction L-glutamine + H2O = L-glutamate + NH4(+). Its pathway is amino-acid biosynthesis; L-arginine biosynthesis; carbamoyl phosphate from bicarbonate: step 1/1. The protein operates within pyrimidine metabolism; UMP biosynthesis via de novo pathway; (S)-dihydroorotate from bicarbonate: step 1/3. In terms of biological role, small subunit of the glutamine-dependent carbamoyl phosphate synthetase (CPSase). CPSase catalyzes the formation of carbamoyl phosphate from the ammonia moiety of glutamine, carbonate, and phosphate donated by ATP, constituting the first step of 2 biosynthetic pathways, one leading to arginine and/or urea and the other to pyrimidine nucleotides. The small subunit (glutamine amidotransferase) binds and cleaves glutamine to supply the large subunit with the substrate ammonia. In Bacillus cereus (strain ZK / E33L), this protein is Carbamoyl phosphate synthase small chain.